The chain runs to 70 residues: Conotoxin Cl9.1 (70 aa).

The signal sequence occupies residues 1 to 20 (MMGKLGVVLFICLVLFPLET). The propeptide occupies 21–50 (LQLEGGQQADRHVDQLEGNPNRETRTIEVR). 3 disulfides stabilise this stretch: cysteine 51–cysteine 63, cysteine 56–cysteine 67, and cysteine 61–cysteine 70.

The protein belongs to the conotoxin M superfamily. In terms of tissue distribution, expressed by the venom duct.

It localises to the secreted. The sequence is that of Conotoxin Cl9.1 from Californiconus californicus (California cone).